A 24-amino-acid chain; its full sequence is EDDHHHHHHHHHGVGGGGGGGGGG.

The segment covering 1–13 (EDDHHHHHHHHHG) has biased composition (basic residues). The interval 1–24 (EDDHHHHHHHHHGVGGGGGGGGGG) is disordered. The span at 14 to 24 (VGGGGGGGGGG) shows a compositional bias: gly residues.

In terms of tissue distribution, expressed by the venom gland.

It localises to the secreted. Its function is as follows. May serve as a metalloproteinase inhibitor during glandular storage. Their inhibition may be instantly disengaged, by dilution or physiochemical change, when venom is injected into tissue of the victim. In Atheris chlorechis (Western bush viper), this protein is Poly-His-poly-Gly peptide 1.